The following is a 368-amino-acid chain: Solute carrier family 35 member G1 (368 aa).

Transmembrane regions (helical) follow at residues 72–92 (GLGL…SLFV), 100–120 (AVEI…PCLI), 134–154 (LFLF…YYAF), 161–181 (DATV…WIFL), 190–210 (AFFT…PFIF), 225–245 (IKGT…LVIL), 256–276 (LSIW…LFVI), 289–309 (LFLI…TKAV), 316–336 (LVAI…IAFF), and 340–360 (PTWW…GATI). EamA domains lie at 83-205 (FLFS…LIVR) and 236-360 (VLAA…GATI).

It belongs to the TMEM20 family. In terms of assembly, interacts with STIM1; stimulated by depletion of intracellular calcium. Interacts with ORAI1. Interacts with the plasma membrane calcium-transporting ATPases ATP2B1 and ATP2B4. Interacts with ATP1A1, ATP2A2, KPNB1 and XPO1.

It localises to the cell membrane. The protein resides in the endoplasmic reticulum membrane. May play a role in intracellular calcium sensing and homeostasis. May act as a negative regulator of plasma membrane calcium-transporting ATPases preventing calcium efflux from the cell. This chain is Solute carrier family 35 member G1 (Slc35g1), found in Mus musculus (Mouse).